The chain runs to 203 residues: Alpha-amylase/subtilisin inhibitor (203 aa).

Polar residues predominate over residues 1–12 (MGSRRAGSSSSP). An N-terminal signal peptide occupies residues 1–22 (MGSRRAGSSSSPLFWPAPPSRA). The disordered stretch occupies residues 1–34 (MGSRRAGSSSSPLFWPAPPSRAADPPPVHDTDGH). The span at 15 to 26 (WPAPPSRAADPP) shows a compositional bias: pro residues. 2 cysteine pairs are disulfide-bonded: C65-C112 and C166-C170.

It belongs to the protease inhibitor I3 (leguminous Kunitz-type inhibitor) family.

Its function is as follows. This protein inhibits independently subtilisin and alpha-amylase. The protein is Alpha-amylase/subtilisin inhibitor of Hordeum vulgare (Barley).